A 500-amino-acid polypeptide reads, in one-letter code: Probable betaine aldehyde dehydrogenase (500 aa).

249 to 254 (GSLATG) contacts NAD(+). The Proton acceptor role is filled by Glu271. The Nucleophile role is filled by Cys305.

It belongs to the aldehyde dehydrogenase family.

It catalyses the reaction betaine aldehyde + NAD(+) + H2O = glycine betaine + NADH + 2 H(+). It participates in amine and polyamine biosynthesis; betaine biosynthesis via choline pathway; betaine from betaine aldehyde: step 1/1. The protein is Probable betaine aldehyde dehydrogenase (meu8) of Schizosaccharomyces pombe (strain 972 / ATCC 24843) (Fission yeast).